Here is a 95-residue protein sequence, read N- to C-terminus: Integration host factor subunit beta (95 aa).

It belongs to the bacterial histone-like protein family. In terms of assembly, heterodimer of an alpha and a beta chain.

Its function is as follows. This protein is one of the two subunits of integration host factor, a specific DNA-binding protein that functions in genetic recombination as well as in transcriptional and translational control. The protein is Integration host factor subunit beta of Klebsiella pneumoniae subsp. pneumoniae (strain ATCC 700721 / MGH 78578).